Reading from the N-terminus, the 95-residue chain is Hiracin-JM79 immunity factor (95 aa).

In terms of biological role, imparts immunity to bacteriocin hiracin-JM79 to naturally sensitive host strains. In Enterococcus hirae, this protein is Hiracin-JM79 immunity factor.